Consider the following 341-residue polypeptide: MAAQMREPKVVVLGGGSWGTTVASICARRGPTLQWVRSRETADDINENHRNSRYLGNDVVLSDTLRATTDFCEAANTADVVVMGVPSHGFRGVLTELARELRPWVPVVSLVKGLEQGTNMRMSQIVEEVLPGHPAGILAGPNIAREVAEGYAAAAVLAMPDQHLATRLSGLFRTRRFRVYTTDDVVGAEMAGALKNVFAIAVGMGYSLGIGENTRALVIARALREMTKLGVAMGGSPDTFPGLAGLGDLIVTCTSQRSRNRHVGEQLGAGKPIDEIIASMNQVAEGVKAASVIMEFANEFGLTMPIAREVDAVINHGSTVEQAYRGLIAEVPGHEVHGSGF.

S17, W18, R37, and K112 together coordinate NADPH. 2 residues coordinate sn-glycerol 3-phosphate: K112 and G140. A144 is an NADPH binding site. Residues K195, D248, S258, R259, and N260 each coordinate sn-glycerol 3-phosphate. The active-site Proton acceptor is K195. R259 lines the NADPH pocket. The NADPH site is built by V283 and E285.

This sequence belongs to the NAD-dependent glycerol-3-phosphate dehydrogenase family.

It is found in the cytoplasm. The catalysed reaction is sn-glycerol 3-phosphate + NAD(+) = dihydroxyacetone phosphate + NADH + H(+). The enzyme catalyses sn-glycerol 3-phosphate + NADP(+) = dihydroxyacetone phosphate + NADPH + H(+). It functions in the pathway membrane lipid metabolism; glycerophospholipid metabolism. Functionally, catalyzes the reduction of the glycolytic intermediate dihydroxyacetone phosphate (DHAP) to sn-glycerol 3-phosphate (G3P), the key precursor for phospholipid synthesis. The polypeptide is Glycerol-3-phosphate dehydrogenase [NAD(P)+] (Mycobacterium avium (strain 104)).